A 609-amino-acid chain; its full sequence is tRNA 5-methylaminomethyl-2-thiouridine biosynthesis bifunctional protein MnmC (609 aa).

The tRNA (mnm(5)s(2)U34)-methyltransferase stretch occupies residues 1-229; the sequence is MVELAAATCL…TRNTLPARAM (229 aa). The segment at 237-609 is FAD-dependent cmnm(5)s(2)U34 oxidoreductase; that stretch reads IGAGLAGASV…SPELPVSCAP (373 aa).

It in the N-terminal section; belongs to the methyltransferase superfamily. tRNA (mnm(5)s(2)U34)-methyltransferase family. The protein in the C-terminal section; belongs to the DAO family. It depends on FAD as a cofactor.

The protein resides in the cytoplasm. The catalysed reaction is 5-aminomethyl-2-thiouridine(34) in tRNA + S-adenosyl-L-methionine = 5-methylaminomethyl-2-thiouridine(34) in tRNA + S-adenosyl-L-homocysteine + H(+). In terms of biological role, catalyzes the last two steps in the biosynthesis of 5-methylaminomethyl-2-thiouridine (mnm(5)s(2)U) at the wobble position (U34) in tRNA. Catalyzes the FAD-dependent demodification of cmnm(5)s(2)U34 to nm(5)s(2)U34, followed by the transfer of a methyl group from S-adenosyl-L-methionine to nm(5)s(2)U34, to form mnm(5)s(2)U34. The polypeptide is tRNA 5-methylaminomethyl-2-thiouridine biosynthesis bifunctional protein MnmC (mnmC) (Albidiferax ferrireducens (strain ATCC BAA-621 / DSM 15236 / T118) (Rhodoferax ferrireducens)).